The sequence spans 480 residues: Type VI lipase adapter protein Tla3 (480 aa).

The tract at residues 410-458 (ISSPTPGKKPVHDPFGVDLLPQTASGDGPPPSADPVAPASRLTTRLPPG) is disordered.

As to quaternary structure, interacts with the Tle3 toxin on one side and with the H2-T6SS component VgrG2b on the other side.

The protein localises to the cytoplasm. Its function is as follows. Adapter protein that targets and loads the Tle3 toxin onto the H2 type VI secretion system (H2-T6SS) machinery through an interaction with the TTR domain of VgrG2b. Seems specific for Tle3. The protein is Type VI lipase adapter protein Tla3 of Pseudomonas aeruginosa (strain ATCC 15692 / DSM 22644 / CIP 104116 / JCM 14847 / LMG 12228 / 1C / PRS 101 / PAO1).